The primary structure comprises 201 residues: 3-isopropylmalate dehydratase small subunit (201 aa).

Belongs to the LeuD family. LeuD type 1 subfamily. In terms of assembly, heterodimer of LeuC and LeuD.

It catalyses the reaction (2R,3S)-3-isopropylmalate = (2S)-2-isopropylmalate. It participates in amino-acid biosynthesis; L-leucine biosynthesis; L-leucine from 3-methyl-2-oxobutanoate: step 2/4. Catalyzes the isomerization between 2-isopropylmalate and 3-isopropylmalate, via the formation of 2-isopropylmaleate. The protein is 3-isopropylmalate dehydratase small subunit of Dinoroseobacter shibae (strain DSM 16493 / NCIMB 14021 / DFL 12).